The chain runs to 638 residues: Intron-encoded RNA maturase bI4 (638 aa).

Residues Met1 to Gln253 form a COB exons 1 to 4 encoded region. Positions Gln253–Asn638 are COB intron 4 encoded.

It in the C-terminal section; belongs to the LAGLIDADG endonuclease family. As to quaternary structure, forms a ternary complex with intron derived RNA and the imported mitochondrial leucyl-tRNA synthetase NAM2. The proteins do not interact directly with each other. Post-translationally, the mature protein may arise from proteolytic cleavage of an in-frame translation of COB exons 1 to 4 plus intron 4, containing the bI4 open reading frame. Cleavage would take place close to the Met-385 resulting in an active maturase of about 30 kDa.

It localises to the mitochondrion. Its function is as follows. Mitochondrial mRNA maturase required for splicing of intron 4 of the cytochrome b (COB) gene, containing its own coding sequence, and intron 4 in COX1, coding for the related homing endonuclease aI4. In vivo splicing requires in addition the imported mitochondrial leucyl-tRNA synthetase NAM2. Both proteins seem to stimulate the intrinsic ribozyme activity of intron bI4 through binding to and stabilizing specific secondary and tertiary structure elements in the RNA. This chain is Intron-encoded RNA maturase bI4 (BI4), found in Saccharomyces cerevisiae (strain ATCC 204508 / S288c) (Baker's yeast).